Reading from the N-terminus, the 142-residue chain is UPF0102 protein Bcep1808_0248 (142 aa).

This sequence belongs to the UPF0102 family.

The polypeptide is UPF0102 protein Bcep1808_0248 (Burkholderia vietnamiensis (strain G4 / LMG 22486) (Burkholderia cepacia (strain R1808))).